The primary structure comprises 436 residues: Probable cinnamyl alcohol dehydrogenase 8B (436 aa).

Position 120 (C120) interacts with Zn(2+). T122 contributes to the NADP(+) binding site. Zn(2+)-binding residues include H142, E143, C173, C176, C179, C187, and C236. Residues T240, 261 to 266, 284 to 289, T324, G348, and 371 to 373 contribute to the NADP(+) site; these read GLGGLG, STSPGK, and NCV.

Belongs to the zinc-containing alcohol dehydrogenase family. Homodimer. Requires Zn(2+) as cofactor.

It carries out the reaction (E)-cinnamyl alcohol + NADP(+) = (E)-cinnamaldehyde + NADPH + H(+). It catalyses the reaction (E)-coniferol + NADP(+) = (E)-coniferaldehyde + NADPH + H(+). The enzyme catalyses (E)-sinapyl alcohol + NADP(+) = (E)-sinapaldehyde + NADPH + H(+). The catalysed reaction is (E)-4-coumaroyl alcohol + NADP(+) = (E)-4-coumaraldehyde + NADPH + H(+). It carries out the reaction (E)-caffeyl alcohol + NADP(+) = (E)-caffeyl aldehyde + NADPH + H(+). It participates in aromatic compound metabolism; phenylpropanoid biosynthesis. Its function is as follows. Involved in lignin biosynthesis. Catalyzes the final step specific for the production of lignin monomers. Catalyzes the NADPH-dependent reduction of coniferaldehyde, 5-hydroxyconiferaldehyde, sinapaldehyde, 4-coumaraldehyde and caffeyl aldehyde to their respective alcohols. This Oryza sativa subsp. japonica (Rice) protein is Probable cinnamyl alcohol dehydrogenase 8B.